The following is an 81-amino-acid chain: uncharacterized protein (81 aa).

This sequence belongs to the ycf70 family.

It localises to the plastid. It is found in the chloroplast. This is an uncharacterized protein from Saccharum officinarum (Sugarcane).